The following is a 494-amino-acid chain: WD repeat-containing protein 37 (494 aa).

2 stretches are compositionally biased toward polar residues: residues 1 to 13 (MPTESASCSTARQ) and 22 to 31 (SLSIRRTNSS). Positions 1-50 (MPTESASCSTARQTKQKRKSHSLSIRRTNSSEQERTGLPRDMLEGQDSKL) are disordered. Over residues 32–47 (EQERTGLPRDMLEGQD) the composition is skewed to basic and acidic residues. WD repeat units lie at residues 154-194 (GHRD…CLVK) and 197-236 (GHVGSVNSIKFHPSEQLALTASGDQTAHIWRYAVQLPTPQ). The disordered stretch occupies residues 237 to 265 (PVADTSISGEDEVECSDKDEPDLDGDVSS). Acidic residues predominate over residues 245–263 (GEDEVECSDKDEPDLDGDV). WD repeat units lie at residues 279–318 (SHQGVVIASDWLVGGKQAVTASWDRTANLYDVETSELVHS), 321–360 (GHDQELTHCCTHPTQRLVVTSSRDTTFRLWDFRDPSIHSV), 365–403 (GHTDTVTSAVFTVGDNVVSGSDDRTVKVWDLKNMRSPIA), 406–445 (RTDSAINRINVCVGQKIIALPHDNRQVRLFDMSGVRLARL), and 452–493 (GHRR…LLQE).

In terms of assembly, forms homodimers. Interacts with PACS1. Interacts with PACS2.

Its subcellular location is the cytoplasm. The protein resides in the nucleus. In terms of biological role, required for normal ER Ca2+ handling in lymphocytes. Together with PACS1, it plays an essential role in stabilizing peripheral lymphocyte populations. In Homo sapiens (Human), this protein is WD repeat-containing protein 37 (WDR37).